The primary structure comprises 579 residues: Arginine--tRNA ligase (579 aa).

The 'HIGH' region signature appears at 127 to 137; it reads PNLAKEMHVGH.

Belongs to the class-I aminoacyl-tRNA synthetase family. In terms of assembly, monomer.

Its subcellular location is the cytoplasm. It carries out the reaction tRNA(Arg) + L-arginine + ATP = L-arginyl-tRNA(Arg) + AMP + diphosphate. The sequence is that of Arginine--tRNA ligase from Ectopseudomonas mendocina (strain ymp) (Pseudomonas mendocina).